The primary structure comprises 480 residues: Aromatic-L-amino-acid decarboxylase (480 aa).

M1 bears the N-acetylmethionine mark. 2 tandem repeats follow at residues 58–115 (KDIE…TELE) and 118–178 (MMDW…TQAA). The segment at 58-178 (KDIEKIIMPG…AASPEFTQAA (121 aa)) is 2 X approximate tandem repeats. T82 lines the substrate pocket. A148 and S149 together coordinate pyridoxal 5'-phosphate. H192 contributes to the substrate binding site. Pyridoxal 5'-phosphate contacts are provided by T246 and N300. N6-(pyridoxal phosphate)lysine is present on K303.

The protein belongs to the group II decarboxylase family. As to quaternary structure, homodimer. It depends on pyridoxal 5'-phosphate as a cofactor.

It catalyses the reaction L-dopa + H(+) = dopamine + CO2. The catalysed reaction is 5-hydroxy-L-tryptophan + H(+) = serotonin + CO2. The protein operates within catecholamine biosynthesis; dopamine biosynthesis; dopamine from L-tyrosine: step 2/2. Its function is as follows. Catalyzes the decarboxylation of L-3,4-dihydroxyphenylalanine (DOPA) to dopamine and L-5-hydroxytryptophan to serotonin. The polypeptide is Aromatic-L-amino-acid decarboxylase (Ddc) (Mus musculus (Mouse)).